The following is a 224-amino-acid chain: Acyl-protein thioesterase 1 (224 aa).

Residues Ser116, Asp170, and His203 each act as charge relay system in the active site.

It belongs to the AB hydrolase superfamily. AB hydrolase 2 family.

The protein resides in the cytoplasm. It is found in the nucleus. It carries out the reaction S-hexadecanoyl-L-cysteinyl-[protein] + H2O = L-cysteinyl-[protein] + hexadecanoate + H(+). Functionally, hydrolyzes fatty acids from S-acylated cysteine residues in proteins with a strong preference for palmitoylated G-alpha proteins over other acyl substrates. Mediates the deacylation of G-alpha proteins such as GPA1 in vivo, but has weak or no activity toward palmitoylated Ras proteins. Has weak lysophospholipase activity in vitro; however such activity may not exist in vivo. This is Acyl-protein thioesterase 1 from Schizosaccharomyces pombe (strain 972 / ATCC 24843) (Fission yeast).